Reading from the N-terminus, the 57-residue chain is uncharacterized protein (57 aa).

This is an uncharacterized protein from Homo sapiens (Human).